The primary structure comprises 251 residues: MNILLTNDDGIQAVGLRALYHGLKRAGMNVQVVAPVAEQSAVGHAVSLSSPLRVKKFEEDGFTGLGVYGTPVDCVKLGLTTLLETKPDIVVSGINSGANVGVDILYSGTVSAATEGALMGYPAMAVSYDSFKPEELTDQGDYCAELLKKIPWDSLGDKTVVNLNFPAVPVKDAEELKICRHTRVSWQDWYEAREDPRGHKYYWLNGVMPKEKISPGTDRDLLTKGHITMTPLHFDFTDREAIATLEQSFGI.

A divalent metal cation-binding residues include Asp8, Asp9, Ser40, and Asn95.

This sequence belongs to the SurE nucleotidase family. The cofactor is a divalent metal cation.

It localises to the cytoplasm. The catalysed reaction is a ribonucleoside 5'-phosphate + H2O = a ribonucleoside + phosphate. Functionally, nucleotidase that shows phosphatase activity on nucleoside 5'-monophosphates. The protein is 5'-nucleotidase SurE of Maridesulfovibrio salexigens (strain ATCC 14822 / DSM 2638 / NCIMB 8403 / VKM B-1763) (Desulfovibrio salexigens).